A 442-amino-acid chain; its full sequence is Septin-8 (442 aa).

Position 2 is an N-acetylalanine (A2). At S10 the chain carries Phosphoserine. A Septin-type G domain is found at 41–307 (QGFSFNILCV…ELYRRCKLEE (267 aa)). Positions 51-58 (GETGIGKS) are G1 motif. GTP-binding positions include 51–58 (GETGIGKS), G106, 187–195 (KADTISKSE), G241, and R256. The interval 103-106 (DAVG) is G3 motif. The segment at 186–189 (AKAD) is G4 motif. Residues 322-410 (LQETYEAKRK…RKAAVEALQS (89 aa)) adopt a coiled-coil conformation. Positions 377 to 391 (HQEEKRKVEEKRREL) are enriched in basic and acidic residues. Residues 377 to 442 (HQEEKRKVEE…WSSIYSVTIP (66 aa)) are disordered. 2 stretches are compositionally biased toward polar residues: residues 408 to 420 (LQSQ…SQQP) and 432 to 442 (GWSSIYSVTIP).

It belongs to the TRAFAC class TrmE-Era-EngA-EngB-Septin-like GTPase superfamily. Septin GTPase family. Septins polymerize into heterooligomeric protein complexes that form filaments, and can associate with cellular membranes, actin filaments and microtubules. GTPase activity is required for filament formation. Interacts with CDK14, SEPTIN4, SEPTIN5 and SEPTIN7. Interacts with VAMP2; the interaction inhibits interaction of VAMP2 with SYP. Interacts with STX1A.

It localises to the cytoplasm. Its subcellular location is the cytoskeleton. The protein resides in the synapse. The protein localises to the cell projection. It is found in the axon. It localises to the cytoplasmic vesicle. Its subcellular location is the secretory vesicle. The protein resides in the synaptic vesicle membrane. The protein localises to the presynapse. Filament-forming cytoskeletal GTPase. May play a role in platelet secretion. Seems to participate in the process of SNARE complex formation in synaptic vesicles. This chain is Septin-8, found in Callithrix jacchus (White-tufted-ear marmoset).